A 583-amino-acid chain; its full sequence is Sensor protein SrrB (583 aa).

Topologically, residues 1–11 (MMSRLNSVVIK) are cytoplasmic. The chain crosses the membrane as a helical span at residues 12–32 (LWLTIILIVTTVLILLSIALI). Over 33 to 174 (TFMQYYFTQE…SIEDTNNAIT (142 aa)) the chain is Extracellular. Residues 175-195 (IITIITAVIFLTITTVFAFFL) traverse the membrane as a helical segment. Residues 196-583 (SSRITKPLRR…TFIIKLPKPE (388 aa)) are Cytoplasmic-facing. The HAMP domain maps to 197–249 (SRITKPLRRLRDQATRVSEGDYSYKPSVTTKDEIGQLSQAFNQMSTEIEEHVD). The Histidine kinase domain occupies 366–583 (NVSHELRTPI…TFIIKLPKPE (218 aa)). His369 carries the post-translational modification Phosphohistidine; by autocatalysis.

Its subcellular location is the cell membrane. It catalyses the reaction ATP + protein L-histidine = ADP + protein N-phospho-L-histidine.. In terms of biological role, member of the two-component regulatory system SrrA/SrrB, which is involved in the global regulation of staphylococcal virulence factors in response to environmental oxygen levels as well as biofilm formation. Also plays an essential role in host-derived nitric oxide resistance by regulating hmp/flavohemoglobin, an enzyme that detoxifies nitric oxide by converting it to nitrate. Functions as a sensor protein kinase which is autophosphorylated at a histidine residue and transfers its phosphate group to SrrA. In turn, SrrA binds to the upstream promoter regions of the target genes to positively and negatively regulate their expression. This Staphylococcus aureus (strain MRSA252) protein is Sensor protein SrrB (srrB).